Here is a 520-residue protein sequence, read N- to C-terminus: mRNA-capping enzyme subunit beta (520 aa).

The disordered stretch occupies residues 1–185 (MNVGSILNDD…PQPVFDDQDD (185 aa)). 2 stretches are compositionally biased toward polar residues: residues 11-21 (PPSSGNANGND) and 44-56 (ITSMLNDTPSDST). Residues 92-108 (SSSSVGSSEHSSARSSP) are compositionally biased toward low complexity. Basic and acidic residues-rich tracts occupy residues 126 to 135 (PATKTEKKAE) and 149 to 176 (KLEEHENDTNKVEKVVDSAPEPKPKKEP).

It belongs to the fungal TPase family. As to quaternary structure, heterodimer. The mRNA-capping enzyme is composed of two separate chains alpha and beta, respectively a mRNA guanylyltransferase and an mRNA 5'-triphosphate monophosphatase. Requires Mg(2+) as cofactor.

It is found in the nucleus. It carries out the reaction a 5'-end triphospho-ribonucleoside in mRNA + H2O = a 5'-end diphospho-ribonucleoside in mRNA + phosphate + H(+). First step of mRNA capping. Converts the 5'-triphosphate end of a nascent mRNA chain into a diphosphate end. This chain is mRNA-capping enzyme subunit beta (CET1), found in Candida albicans (strain SC5314 / ATCC MYA-2876) (Yeast).